Here is a 168-residue protein sequence, read N- to C-terminus: Cell division inhibitor SulA (168 aa).

The tract at residues 1–20 (MSTQSVSSHNIESSSFSANQ) is disordered. Residues 105–111 (ALLTGNY) are ftsZ binding. A lon protease binding region spans residues 161 to 168 (KIHSTLYH).

This sequence belongs to the SulA family. As to quaternary structure, interacts with FtsZ. Is rapidly cleaved and degraded by the Lon protease once DNA damage is repaired.

Functionally, component of the SOS system and an inhibitor of cell division. Accumulation of SulA causes rapid cessation of cell division and the appearance of long, non-septate filaments. In the presence of GTP, binds a polymerization-competent form of FtsZ in a 1:1 ratio, thus inhibiting FtsZ polymerization and therefore preventing it from participating in the assembly of the Z ring. This mechanism prevents the premature segregation of damaged DNA to daughter cells during cell division. The chain is Cell division inhibitor SulA from Pectobacterium atrosepticum (strain SCRI 1043 / ATCC BAA-672) (Erwinia carotovora subsp. atroseptica).